Here is a 420-residue protein sequence, read N- to C-terminus: Glutamyl-tRNA reductase (420 aa).

Substrate contacts are provided by residues 49–52 (TCNR), Ser110, 115–117 (EHQ), and Gln121. Catalysis depends on Cys50, which acts as the Nucleophile. Residue 190–195 (GSGTIN) participates in NADP(+) binding.

The protein belongs to the glutamyl-tRNA reductase family. In terms of assembly, homodimer.

The catalysed reaction is (S)-4-amino-5-oxopentanoate + tRNA(Glu) + NADP(+) = L-glutamyl-tRNA(Glu) + NADPH + H(+). It functions in the pathway porphyrin-containing compound metabolism; protoporphyrin-IX biosynthesis; 5-aminolevulinate from L-glutamyl-tRNA(Glu): step 1/2. Catalyzes the NADPH-dependent reduction of glutamyl-tRNA(Glu) to glutamate 1-semialdehyde (GSA). This Wigglesworthia glossinidia brevipalpis protein is Glutamyl-tRNA reductase.